Here is a 178-residue protein sequence, read N- to C-terminus: CASP-like protein 5A1 (178 aa).

Residues 1 to 11 (MFASRPAVHPV) are compositionally biased toward low complexity. The disordered stretch occupies residues 1 to 25 (MFASRPAVHPVEAPPPPDPAEQPRG). Residues 1–37 (MFASRPAVHPVEAPPPPDPAEQPRGVLMKDLPGMPGT) are Cytoplasmic-facing. The chain crosses the membrane as a helical span at residues 38–58 (AGGLGLRLAQFAFAAVALAVM). The Extracellular segment spans residues 59-69 (ASTNDFPSVTS). Residues 70 to 90 (FCFLVAAAILQCLWSFSLAIV) form a helical membrane-spanning segment. Topologically, residues 91–105 (DIYALLVKRCLRNRR) are cytoplasmic. The helical transmembrane segment at 106-126 (AVCLFAIGDGITAALTFSAAC) threads the bilayer. At 127–152 (ASSGITVLIDNDLDLCSENHCASFES) the chain is on the extracellular side. Residues 153–173 (ATAMAFLSWFALSPSFLLNFW) traverse the membrane as a helical segment. Over 174 to 178 (SMASG) the chain is Cytoplasmic.

This sequence belongs to the Casparian strip membrane proteins (CASP) family. As to quaternary structure, homodimer and heterodimers.

It localises to the cell membrane. In Oryza sativa subsp. japonica (Rice), this protein is CASP-like protein 5A1.